Reading from the N-terminus, the 444-residue chain is Histidinol dehydrogenase (444 aa).

The NAD(+) site is built by Y135, Q199, and N227. Substrate is bound by residues T250, Q272, and H275. The Zn(2+) site is built by Q272 and H275. Active-site proton acceptor residues include E341 and H342. The substrate site is built by H342, D375, E429, and H434. Position 375 (D375) interacts with Zn(2+). H434 contributes to the Zn(2+) binding site.

Belongs to the histidinol dehydrogenase family. Requires Zn(2+) as cofactor.

The catalysed reaction is L-histidinol + 2 NAD(+) + H2O = L-histidine + 2 NADH + 3 H(+). It participates in amino-acid biosynthesis; L-histidine biosynthesis; L-histidine from 5-phospho-alpha-D-ribose 1-diphosphate: step 9/9. In terms of biological role, catalyzes the sequential NAD-dependent oxidations of L-histidinol to L-histidinaldehyde and then to L-histidine. The polypeptide is Histidinol dehydrogenase (hisD) (Mycobacterium bovis (strain ATCC BAA-935 / AF2122/97)).